Reading from the N-terminus, the 435-residue chain is Glucan 1,3-beta-glucosidase (435 aa).

The first 30 residues, 1–30 (MLFPVLHLPKAMKFSSFSLIASSLLSLVAA), serve as a signal peptide directing secretion. The active-site Proton donor is glutamate 222. 2 disulfides stabilise this stretch: cysteine 306–cysteine 432 and cysteine 331–cysteine 357. The Nucleophile role is filled by glutamate 323.

It belongs to the glycosyl hydrolase 5 (cellulase A) family.

It localises to the secreted. It catalyses the reaction Successive hydrolysis of beta-D-glucose units from the non-reducing ends of (1-&gt;3)-beta-D-glucans, releasing alpha-glucose.. In terms of biological role, beta-glucanases participate in the metabolism of beta-glucan, the main structural component of the cell wall. It could also function biosynthetically as a transglycosylase. The polypeptide is Glucan 1,3-beta-glucosidase (Pichia angusta (Yeast)).